The following is a 272-amino-acid chain: Putative pyruvate, phosphate dikinase regulatory protein (272 aa).

An ADP-binding site is contributed by 151 to 158 (GISRTSKT).

This sequence belongs to the pyruvate, phosphate/water dikinase regulatory protein family. PDRP subfamily.

It carries out the reaction N(tele)-phospho-L-histidyl/L-threonyl-[pyruvate, phosphate dikinase] + ADP = N(tele)-phospho-L-histidyl/O-phospho-L-threonyl-[pyruvate, phosphate dikinase] + AMP + H(+). The enzyme catalyses N(tele)-phospho-L-histidyl/O-phospho-L-threonyl-[pyruvate, phosphate dikinase] + phosphate + H(+) = N(tele)-phospho-L-histidyl/L-threonyl-[pyruvate, phosphate dikinase] + diphosphate. Bifunctional serine/threonine kinase and phosphorylase involved in the regulation of the pyruvate, phosphate dikinase (PPDK) by catalyzing its phosphorylation/dephosphorylation. In Staphylococcus aureus (strain Mu3 / ATCC 700698), this protein is Putative pyruvate, phosphate dikinase regulatory protein.